The chain runs to 240 residues: Uridylate kinase (240 aa).

ATP is bound at residue 14 to 17 (KLSG). Gly56 contacts UMP. ATP contacts are provided by Gly57 and Arg61. Residues Asp76 and 137 to 144 (TGNPFFTT) each bind UMP. ATP is bound by residues Thr164, Tyr170, and Asp173.

This sequence belongs to the UMP kinase family. Homohexamer.

The protein resides in the cytoplasm. It catalyses the reaction UMP + ATP = UDP + ADP. It functions in the pathway pyrimidine metabolism; CTP biosynthesis via de novo pathway; UDP from UMP (UMPK route): step 1/1. Its activity is regulated as follows. Inhibited by UTP. In terms of biological role, catalyzes the reversible phosphorylation of UMP to UDP. The sequence is that of Uridylate kinase from Albidiferax ferrireducens (strain ATCC BAA-621 / DSM 15236 / T118) (Rhodoferax ferrireducens).